Consider the following 956-residue polypeptide: Nitrogen regulatory protein NUT1 (956 aa).

Over residues 1–12 the composition is skewed to basic and acidic residues; sequence MNPTITEHDFRF. 5 disordered regions span residues 1-51, 120-222, 240-262, 348-373, and 524-661; these read MNPT…NDAQ, QQEE…PAAA, KTSI…FQVP, GQSI…SQVS, and TLPG…DAPT. Residues 15 to 37 show a composition bias toward low complexity; it reads RPAAPGRDPGSDSSDDPLPASLR. Polar residues-rich tracts occupy residues 42–51, 131–153, 167–194, and 208–217; these read DRQSAFNDAQ, PLKT…QKKS, SHGS…NAIS, and AAQSQFNPQS. The segment covering 588–613 has biased composition (polar residues); it reads NASTTAIPNSQMQYEQQGVQGHTNSP. 2 stretches are compositionally biased toward low complexity: residues 623–633 and 640–661; these read SGFSSVVHSRP and SKNG…DAPT. The segment at 663-687 adopts a GATA-type zinc-finger fold; sequence CTNCATQTTPLWRRNPEGQPLCNAC. The segment at 708–890 is disordered; sequence KKRNRGSGSN…AATRPSGFGT (183 aa). Residues 713–760 are compositionally biased toward polar residues; that stretch reads GSGSNVPGATSGSRSKKGATSTAVSGTNTRKNSSLAISRTASTTNVQV. The span at 812–839 shows a compositional bias: low complexity; that stretch reads VVPIAAAPPKNMPGPGAAAAARTVALGP. Polar residues-rich tracts occupy residues 849–863 and 872–881; these read SPAN…NANH and PENSTGSNEA.

It is found in the nucleus. Its function is as follows. Major nitrogen regulatory protein; activates expression of nitrogen-regulated genes. The protein is Nitrogen regulatory protein NUT1 (NUT1) of Pyricularia oryzae (strain 70-15 / ATCC MYA-4617 / FGSC 8958) (Rice blast fungus).